Consider the following 114-residue polypeptide: Small ribosomal subunit protein bS6 (114 aa).

This sequence belongs to the bacterial ribosomal protein bS6 family.

Its function is as follows. Binds together with bS18 to 16S ribosomal RNA. In Phocaeicola vulgatus (strain ATCC 8482 / DSM 1447 / JCM 5826 / CCUG 4940 / NBRC 14291 / NCTC 11154) (Bacteroides vulgatus), this protein is Small ribosomal subunit protein bS6.